The chain runs to 172 residues: Adenine phosphoribosyltransferase (172 aa).

Belongs to the purine/pyrimidine phosphoribosyltransferase family. In terms of assembly, homodimer.

Its subcellular location is the cytoplasm. It carries out the reaction AMP + diphosphate = 5-phospho-alpha-D-ribose 1-diphosphate + adenine. It participates in purine metabolism; AMP biosynthesis via salvage pathway; AMP from adenine: step 1/1. Catalyzes a salvage reaction resulting in the formation of AMP, that is energically less costly than de novo synthesis. This is Adenine phosphoribosyltransferase from Latilactobacillus sakei subsp. sakei (strain 23K) (Lactobacillus sakei subsp. sakei).